Consider the following 160-residue polypeptide: Small ribosomal subunit protein bS6 (160 aa).

Belongs to the bacterial ribosomal protein bS6 family.

Functionally, binds together with bS18 to 16S ribosomal RNA. This chain is Small ribosomal subunit protein bS6, found in Ureaplasma urealyticum serovar 10 (strain ATCC 33699 / Western).